The chain runs to 253 residues: uncharacterized protein (253 aa).

This is an uncharacterized protein from Mycoplasma pneumoniae (strain ATCC 29342 / M129 / Subtype 1) (Mycoplasmoides pneumoniae).